The sequence spans 340 residues: Thylakoidal processing peptidase 1, chloroplastic (340 aa).

Residues 1-52 (MAIRITFTYSTHVARNLVGTRVGPGGYCFESLVRPRFFSHKRDFDRSPRNRP) constitute a chloroplast transit peptide. Residues 155–175 (EDAKAAFTAVTVSILFRSALA) traverse the membrane as a helical segment. Residues 176 to 340 (EPKSIPSTSM…AITRGPVAVS (165 aa)) lie on the Lumenal, thylakoid side of the membrane. The active site involves serine 184.

Belongs to the peptidase S26 family.

It is found in the plastid. The protein localises to the chloroplast thylakoid membrane. It catalyses the reaction Cleavage of hydrophobic, N-terminal signal or leader sequences from secreted and periplasmic proteins.. Functionally, cleaves the thylakoid-transfer domain from a chloroplast protein. This is Thylakoidal processing peptidase 1, chloroplastic (TPP1) from Arabidopsis thaliana (Mouse-ear cress).